A 55-amino-acid polypeptide reads, in one-letter code: uncharacterized protein (55 aa).

This is an uncharacterized protein from Salmonella typhimurium (strain LT2 / SGSC1412 / ATCC 700720).